The sequence spans 517 residues: Synaptic vesicular amine transporter (517 aa).

Residues 1–20 lie on the Cytoplasmic side of the membrane; sequence MALSDLVLLRWLRDSRHSRK. A helical membrane pass occupies residues 21-41; it reads LILFIVFLALLLDNMLLTVVV. Topologically, residues 42 to 132 are extracellular; sequence PIIPSYLYSI…EDKDLLNENV (91 aa). N-linked (GlcNAc...) asparagine glycans are attached at residues asparagine 56, asparagine 83, asparagine 84, asparagine 91, and asparagine 113. Residues 100-119 form a disordered region; sequence ESPKATTTQHTVTNTTVPPD. Positions 105 to 115 are enriched in low complexity; sequence TTTQHTVTNTT. The cysteines at positions 120 and 327 are disulfide-linked. Residues 133–153 form a helical membrane-spanning segment; the sequence is QVGLLFASKATVQLLTNPFIG. Over 154–162 the chain is Cytoplasmic; that stretch reads LLTNRIGYP. The chain crosses the membrane as a helical span at residues 163–183; that stretch reads IPMFAGFCIMFISTVMFAFSS. At 184-192 the chain is on the extracellular side; the sequence is SYAFLLIAR. A helical membrane pass occupies residues 193 to 213; the sequence is SLQGIGSSCSSVAGMGMLASV. The Cytoplasmic portion of the chain corresponds to 214 to 222; the sequence is YTDDEERGN. A helical transmembrane segment spans residues 223-245; sequence AMGIALGGLAMGVLVGPPFGSVL. Serotonin contacts are provided by leucine 231 and valine 235. Topologically, residues 246–251 are extracellular; that stretch reads YEFVGK. A helical transmembrane segment spans residues 252–274; that stretch reads TAPFLVLAALVLLDGAIQLFVLQ. The Cytoplasmic portion of the chain corresponds to 275-294; it reads PSRVQPESQKGTPLTTLLKD. The helical transmembrane segment at 295 to 314 threads the bilayer; the sequence is PYILIAAGSICFANMGIAML. Serotonin-binding residues include asparagine 308, isoleucine 311, glutamate 315, phenylalanine 337, and tyrosine 344. At 315 to 331 the chain is on the extracellular side; the sequence is EPALPIWMMETMCSRKW. A helical membrane pass occupies residues 332 to 355; sequence QLGVAFLPASISYLIGTNIFGILA. At 356–360 the chain is on the cytoplasmic side; it reads HKMGR. A helical membrane pass occupies residues 361–381; that stretch reads WLCALLGMIVVGISILCIPFA. Topologically, residues 382 to 392 are extracellular; that stretch reads KNIYGLIAPNF. Residues 393 to 413 form a helical membrane-spanning segment; it reads GVGFAIGMVDSSMMPIMGYLV. A serotonin-binding site is contributed by aspartate 402. At 414–417 the chain is on the cytoplasmic side; sequence DLRH. Residues 418–438 traverse the membrane as a helical segment; sequence VSVYGSVYAIADVAFCMGYAI. Position 436 (tyrosine 436) interacts with serotonin. Over 439–443 the chain is Extracellular; sequence GPSAG. The helical transmembrane segment at 444–465 threads the bilayer; it reads GAIAKAIGFPWLMTIIGIIDIV. Over 466-517 the chain is Cytoplasmic; it reads FAPLCFFLRSPPAKEEKMAILMDHNCPIKTKMYTQNNVQPYPVGDDEESESD. Serine 514 and serine 516 each carry phosphoserine; by CK2.

The protein belongs to the major facilitator superfamily. Vesicular transporter family. In terms of assembly, interacts with SLC6A3. Expressed in striata and substantia nigra.

It localises to the cytoplasmic vesicle. The protein localises to the secretory vesicle. The protein resides in the synaptic vesicle membrane. It is found in the secretory vesicle membrane. Its subcellular location is the cell projection. It localises to the axon. The protein localises to the dendrite. The catalysed reaction is serotonin(in) + 2 H(+)(out) = serotonin(out) + 2 H(+)(in). It catalyses the reaction dopamine(in) + 2 H(+)(out) = dopamine(out) + 2 H(+)(in). The enzyme catalyses histamine(in) + 2 H(+)(out) = histamine(out) + 2 H(+)(in). Strongly inhibited by reserpine and tetrabenazine. Also inhibited to a lesser extent by ketanserin and fenfluramine. Reserpine and ketanserin inhibit by blocking the substrate-binding pocket. Tetrabenazine traps SLC18A2/VMAT2 in an occluded conformation and its inhibition is specific to SLC18A2/VMAT2 but not SLC18A1/VMAT1. Functionally, electrogenic antiporter that exchanges one cationic monoamine with two intravesicular protons across the membrane of secretory and synaptic vesicles. Uses the electrochemical proton gradient established by the V-type proton-pump ATPase to accumulate high concentrations of monoamines inside the vesicles prior to their release via exocytosis. Transports a variety of catecholamines such as dopamine, adrenaline and noradrenaline, histamine, and indolamines such as serotonin. Regulates the transvesicular monoaminergic gradient that determines the quantal size. Mediates somatodendritic dopamine release in hippocampal neurons, likely as part of a regulated secretory pathway that integrates retrograde synaptic signals. Acts as a primary transporter for striatal dopamine loading ensuring impulse-dependent release of dopamine at the synaptic cleft. Responsible for histamine and serotonin storage and subsequent corelease from mast cell granules. The sequence is that of Synaptic vesicular amine transporter (Slc18a2) from Mus musculus (Mouse).